A 206-amino-acid polypeptide reads, in one-letter code: Ribosomal RNA large subunit methyltransferase E (206 aa).

The S-adenosyl-L-methionine site is built by G60, W62, D80, D96, and D121. K161 serves as the catalytic Proton acceptor.

Belongs to the class I-like SAM-binding methyltransferase superfamily. RNA methyltransferase RlmE family.

Its subcellular location is the cytoplasm. The enzyme catalyses uridine(2552) in 23S rRNA + S-adenosyl-L-methionine = 2'-O-methyluridine(2552) in 23S rRNA + S-adenosyl-L-homocysteine + H(+). Its function is as follows. Specifically methylates the uridine in position 2552 of 23S rRNA at the 2'-O position of the ribose in the fully assembled 50S ribosomal subunit. The chain is Ribosomal RNA large subunit methyltransferase E from Legionella pneumophila (strain Lens).